The primary structure comprises 163 residues: Disulfide bond formation protein B 1 (163 aa).

The Cytoplasmic segment spans residues 1–9 (MPLASPRQL). A helical transmembrane segment spans residues 10-26 (FLLAFLACVAIMGGALY). Topologically, residues 27-44 (LEHVVGLEACPLCVVQRI) are periplasmic. Cys36 and Cys39 are disulfide-bonded. The helical transmembrane segment at 45–61 (FFILIGLTCLAGAIQGP) threads the bilayer. The Cytoplasmic segment spans residues 62–67 (GLRGRR). The helical transmembrane segment at 68–85 (IYSVLVFLLALGGGATAA) threads the bilayer. Residues 86–142 (RQVWLQTVPLDQLPACLPSLDYMMQALPFQEVIRLVLHGTADCAQVSWTLFTLSIPE) are Periplasmic-facing. Residues Cys101 and Cys128 are joined by a disulfide bond. The helical transmembrane segment at 143–161 (WSLLAFVAYLGFSIVQFLR) threads the bilayer. Residues 162 to 163 (RA) are Cytoplasmic-facing.

Belongs to the DsbB family.

It localises to the cell inner membrane. Its function is as follows. Required for disulfide bond formation in some periplasmic proteins. Acts by oxidizing the DsbA protein. The chain is Disulfide bond formation protein B 1 (dsbB1) from Pseudomonas aeruginosa (strain ATCC 15692 / DSM 22644 / CIP 104116 / JCM 14847 / LMG 12228 / 1C / PRS 101 / PAO1).